A 531-amino-acid polypeptide reads, in one-letter code: Peptide chain release factor 3 (531 aa).

A tr-type G domain is found at 13 to 282 (AKRRTFAIIS…TLIKYAPPPK (270 aa)). GTP-binding positions include 22–29 (SHPDAGKT), 90–94 (DTPGH), and 144–147 (NKLD).

This sequence belongs to the TRAFAC class translation factor GTPase superfamily. Classic translation factor GTPase family. PrfC subfamily.

It is found in the cytoplasm. Its function is as follows. Increases the formation of ribosomal termination complexes and stimulates activities of RF-1 and RF-2. It binds guanine nucleotides and has strong preference for UGA stop codons. It may interact directly with the ribosome. The stimulation of RF-1 and RF-2 is significantly reduced by GTP and GDP, but not by GMP. The chain is Peptide chain release factor 3 from Psychrobacter cryohalolentis (strain ATCC BAA-1226 / DSM 17306 / VKM B-2378 / K5).